The following is a 136-amino-acid chain: Cytochrome c oxidase subunit 13, mitochondrial (136 aa).

The transit peptide at 1-29 (MFAQRQMFFARLAANLRAPAVRQTVQRRF) directs the protein to the mitochondrion. Over 30-62 (ASTPANESGKNAFVREREAVKQHAAETTELWRK) the chain is Mitochondrial matrix. A helical membrane pass occupies residues 63–83 (ISLYGIPPALALAGYNAYTLY). Residues 84-136 (NEHWEHWSHLPPLEERTEYPYQNIRTRNYPWGDGDKTLFWNESVNYHNRDKVT) are Mitochondrial intermembrane-facing.

It belongs to the cytochrome c oxidase subunit 6A family. In terms of assembly, component of the cytochrome c oxidase (complex IV, CIV), a multisubunit enzyme composed of 11 subunits. The complex is composed of a catalytic core of 3 subunits Cox1, Cox2 and Cox3, encoded in the mitochondrial DNA, and 8 supernumerary subunits Cox4, Cox5a/Cox5, Cox6, Cox7, Cox8, Cox7a/Cox9, Cox6b/Cox12 and Cox6a/Cox13, which are encoded in the nuclear genome. The complex exists as a monomer or a dimer and forms respiratory supercomplexes (SCs) in the inner mitochondrial membrane with NADH-ubiquinone oxidoreductase (complex I, CI) and ubiquinol-cytochrome c oxidoreductase (cytochrome b-c1 complex, complex III, CIII), resulting in various different assemblies (supercomplexes I(1)IV(1), I(1)III(3)IV(2), III(2)IV(1) and III(2)IV(2) as well as larger supercomplexes of compositions like I(1)III(2)IV(5-6)). Cox6a/Cox13 was not present in the cryo-EM structure. It may be involved in complex IV dimer formation and might not be always expressed. This would explain its absence in the map of the isolated monomer.

The protein resides in the mitochondrion inner membrane. It functions in the pathway energy metabolism; oxidative phosphorylation. Functionally, component of the cytochrome c oxidase, the last enzyme in the mitochondrial electron transport chain which drives oxidative phosphorylation. The respiratory chain contains 3 multisubunit complexes succinate dehydrogenase (complex II, CII), ubiquinol-cytochrome c oxidoreductase (cytochrome b-c1 complex, complex III, CIII) and cytochrome c oxidase (complex IV, CIV), that cooperate to transfer electrons derived from NADH and succinate to molecular oxygen, creating an electrochemical gradient over the inner membrane that drives transmembrane transport and the ATP synthase. Cytochrome c oxidase is the component of the respiratory chain that catalyzes the reduction of oxygen to water. Electrons originating from reduced cytochrome c in the intermembrane space (IMS) are transferred via the dinuclear copper A center (CU(A)) of Cox2 and heme A of Cox1 to the active site in Cox1, a binuclear center (BNC) formed by heme A3 and copper B (CU(B)). The BNC reduces molecular oxygen to 2 water molecules using 4 electrons from cytochrome c in the IMS and 4 protons from the mitochondrial matrix. The protein is Cytochrome c oxidase subunit 13, mitochondrial (eat-5) of Neurospora crassa (strain ATCC 24698 / 74-OR23-1A / CBS 708.71 / DSM 1257 / FGSC 987).